We begin with the raw amino-acid sequence, 256 residues long: Imidazole glycerol phosphate synthase subunit HisF (256 aa).

Residues Asp-12 and Asp-131 contribute to the active site.

This sequence belongs to the HisA/HisF family. Heterodimer of HisH and HisF.

The protein localises to the cytoplasm. The enzyme catalyses 5-[(5-phospho-1-deoxy-D-ribulos-1-ylimino)methylamino]-1-(5-phospho-beta-D-ribosyl)imidazole-4-carboxamide + L-glutamine = D-erythro-1-(imidazol-4-yl)glycerol 3-phosphate + 5-amino-1-(5-phospho-beta-D-ribosyl)imidazole-4-carboxamide + L-glutamate + H(+). The protein operates within amino-acid biosynthesis; L-histidine biosynthesis; L-histidine from 5-phospho-alpha-D-ribose 1-diphosphate: step 5/9. In terms of biological role, IGPS catalyzes the conversion of PRFAR and glutamine to IGP, AICAR and glutamate. The HisF subunit catalyzes the cyclization activity that produces IGP and AICAR from PRFAR using the ammonia provided by the HisH subunit. In Bifidobacterium adolescentis (strain ATCC 15703 / DSM 20083 / NCTC 11814 / E194a), this protein is Imidazole glycerol phosphate synthase subunit HisF.